A 210-amino-acid polypeptide reads, in one-letter code: ATP phosphoribosyltransferase (210 aa).

This sequence belongs to the ATP phosphoribosyltransferase family. Short subfamily. Heteromultimer composed of HisG and HisZ subunits.

Its subcellular location is the cytoplasm. It carries out the reaction 1-(5-phospho-beta-D-ribosyl)-ATP + diphosphate = 5-phospho-alpha-D-ribose 1-diphosphate + ATP. It participates in amino-acid biosynthesis; L-histidine biosynthesis; L-histidine from 5-phospho-alpha-D-ribose 1-diphosphate: step 1/9. In terms of biological role, catalyzes the condensation of ATP and 5-phosphoribose 1-diphosphate to form N'-(5'-phosphoribosyl)-ATP (PR-ATP). Has a crucial role in the pathway because the rate of histidine biosynthesis seems to be controlled primarily by regulation of HisG enzymatic activity. The protein is ATP phosphoribosyltransferase of Picosynechococcus sp. (strain ATCC 27264 / PCC 7002 / PR-6) (Agmenellum quadruplicatum).